The primary structure comprises 922 residues: Autophagy-related protein 9B (922 aa).

Disordered stretches follow at residues Met-1–Pro-22 and Thr-85–Leu-144. Residues Met-1–Gly-206 lie on the Cytoplasmic side of the membrane. The span at Thr-85–Gly-114 shows a compositional bias: polar residues. The segment covering Ser-115 to Ala-124 has biased composition (low complexity). A Tyrosine-based sorting signal motif is present at residues Tyr-150 to Leu-153. A helical transmembrane segment spans residues Phe-207–Phe-227. Residues Thr-228–His-275 are Lumenal-facing. Residues Asp-276–Leu-296 traverse the membrane as a helical segment. Residues Arg-297–Thr-437 are Cytoplasmic-facing. An intramembrane segment occupies Val-438–Leu-458. The Cytoplasmic segment spans residues His-459–Arg-523. A helical membrane pass occupies residues Ala-524–Leu-544. Topologically, residues Thr-545–Asp-550 are lumenal. A helical membrane pass occupies residues Val-551–Ala-571. Over Arg-572–Ala-624 the chain is Cytoplasmic. An intramembrane segment occupies Val-625–Phe-645. Residues Arg-646–His-922 lie on the Cytoplasmic side of the membrane. Positions Glu-848–His-922 are disordered. 2 stretches are compositionally biased toward low complexity: residues Ser-854–Ser-870 and Ser-877–Pro-889. Over residues Arg-890–Gln-899 the composition is skewed to polar residues.

It belongs to the ATG9 family. As to quaternary structure, homotrimer; forms a homotrimer with a central pore that forms a path between the two membrane leaflets. Expressed in heart, brain, and placenta and testis.

The protein resides in the preautophagosomal structure membrane. The catalysed reaction is a 1,2-diacyl-sn-glycero-3-phosphocholine(in) = a 1,2-diacyl-sn-glycero-3-phosphocholine(out). It catalyses the reaction a 1,2-diacyl-sn-glycero-3-phospho-L-serine(in) = a 1,2-diacyl-sn-glycero-3-phospho-L-serine(out). It carries out the reaction a 1,2-diacyl-sn-glycero-3-phosphoethanolamine(in) = a 1,2-diacyl-sn-glycero-3-phosphoethanolamine(out). In terms of biological role, phospholipid scramblase involved in autophagy by mediating autophagosomal membrane expansion. Cycles between the preautophagosomal structure/phagophore assembly site (PAS) and the cytoplasmic vesicle pool and supplies membrane for the growing autophagosome. Lipid scramblase activity plays a key role in preautophagosomal structure/phagophore assembly by distributing the phospholipids that arrive through ATG2 (ATG2A or ATG2B) from the cytoplasmic to the luminal leaflet of the bilayer, thereby driving autophagosomal membrane expansion. In addition to autophagy, also plays a role in necrotic cell death. The polypeptide is Autophagy-related protein 9B (Mus musculus (Mouse)).